Reading from the N-terminus, the 177-residue chain is Pyruvate synthase subunit PorC (177 aa).

In terms of assembly, heterotetramer of one alpha, one beta, one delta and one gamma chain.

The enzyme catalyses 2 oxidized [2Fe-2S]-[ferredoxin] + pyruvate + CoA = 2 reduced [2Fe-2S]-[ferredoxin] + acetyl-CoA + CO2 + H(+). This chain is Pyruvate synthase subunit PorC (porC), found in Methanothermobacter marburgensis (strain ATCC BAA-927 / DSM 2133 / JCM 14651 / NBRC 100331 / OCM 82 / Marburg) (Methanobacterium thermoautotrophicum).